The sequence spans 252 residues: Metalloprotease LoiP (252 aa).

Positions 1–18 (MKIRALLVAMSVATVLTG) are cleaved as a signal peptide. Cysteine 19 carries N-palmitoyl cysteine lipidation. Cysteine 19 carries the S-diacylglycerol cysteine lipid modification. The cysteines at positions 53 and 108 are disulfide-linked. Position 130 (histidine 130) interacts with Zn(2+). The active site involves glutamate 131. Positions 134 and 189 each coordinate Zn(2+). Residues 224 to 252 (RQSSMFDDHPASAERAQHIRDRMSADGIK) form a disordered region.

This sequence belongs to the peptidase M48B family. Interacts with Era and BepA. Zn(2+) is required as a cofactor. The intramolecular disulfide bond improves the stability and the activity of LoiP. It forms even in the absence of the oxido-reductase DsbA.

Its subcellular location is the cell outer membrane. Its function is as follows. Metalloprotease that cleaves substrates preferentially between Phe-Phe residues. Plays a role in response to some stress conditions. Seems to regulate the expression of speB. The chain is Metalloprotease LoiP (loiP) from Escherichia coli (strain K12).